Consider the following 127-residue polypeptide: Cyclin-dependent protein kinase inhibitor SIM (127 aa).

The disordered stretch occupies residues 21 to 71 (RANTNRDDDGGGCTTPTSSDHKIPPTTATTPPPPPQKPRPPSTPSSLGIRS). The segment covering 50-63 (TPPPPPQKPRPPST) has biased composition (pro residues).

In terms of assembly, interacts with CDKA-1. Interacts with CYCD2-1, CYCD3-2 and CYCD4-1. Interacts with CDKB1-1. Interacts with CPR5. As to expression, expressed in the shoot apical meristem, leaf primordia and the elongation zone of the root.

The protein localises to the nucleus. In terms of biological role, cyclin-dependent protein kinase (CDK) inhibitor that functions as a repressor of mitosis in the endoreduplication cell cycle. Inhibits the kinase activity of CYCD3-1/CDKA-1, CYCD2-1/CDKA-1 and CYCB1-1/CDKB1-1 complexes in a dose dependent manner. Cooperates with SMR1 and SMR2 to promote endoreplication during leaf development. Required for normal trichome endoreplicating cell cycles. Positive regulator of effector-triggered immunity (ETI). In Arabidopsis thaliana (Mouse-ear cress), this protein is Cyclin-dependent protein kinase inhibitor SIM.